The chain runs to 318 residues: Ubiquitin-like domain-containing CTD phosphatase 1 (318 aa).

In terms of domain architecture, Ubiquitin-like spans 3 to 81 (LSLIIKWGGQ…IMMMGTREES (79 aa)). The 162-residue stretch at 133–294 (PREGKKLLVL…LKLTQYLKEI (162 aa)) folds into the FCP1 homology domain. The Mg(2+) site is built by Asp-143, Asp-145, and Asp-253.

Mg(2+) serves as cofactor.

The protein resides in the nucleus. It catalyses the reaction O-phospho-L-seryl-[protein] + H2O = L-seryl-[protein] + phosphate. It carries out the reaction O-phospho-L-threonyl-[protein] + H2O = L-threonyl-[protein] + phosphate. Dephosphorylates 26S nuclear proteasomes, thereby decreasing their proteolytic activity. Recruited to the 19S regulatory particle of the 26S proteasome where it dephosphorylates 19S component PSMC2 which impairs PSMC2 ATPase activity and disrupts 26S proteasome assembly. Has also been reported to stimulate the proteolytic activity of the 26S proteasome. In Gallus gallus (Chicken), this protein is Ubiquitin-like domain-containing CTD phosphatase 1 (UBLCP1).